A 1024-amino-acid chain; its full sequence is Translation initiation factor IF-2 (1024 aa).

The tract at residues 33-425 (SHMSSLEDDT…GRVKKTKTMK (393 aa)) is disordered. Composition is skewed to basic and acidic residues over residues 43 to 62 (EARV…DTRV), 135 to 148 (TPED…ELKP), 167 to 198 (TPAK…KETS), and 223 to 263 (SKPD…KEVR). The span at 316 to 325 (EATQAPTSPQ) shows a compositional bias: polar residues. The span at 332–350 (KPADKGPARAQAHRPDTGR) shows a compositional bias: basic and acidic residues. Residues 365 to 375 (RSKKKEWKKKG) are compositionally biased toward basic residues. Basic and acidic residues predominate over residues 394–406 (SVVEGKDLYEKGR). A compositionally biased stretch (basic residues) spans 407–423 (SGKKGRRKDGRVKKTKT). Residues 518–687 (SRPPVVTIMG…LLQSEVLELK (170 aa)) form the tr-type G domain. The segment at 527-534 (GHVDHGKT) is G1. 527 to 534 (GHVDHGKT) contacts GTP. The interval 552–556 (GITQH) is G2. Positions 573-576 (DTPG) are G3. Residues 573–577 (DTPGH) and 627–630 (NKMD) each bind GTP. The G4 stretch occupies residues 627–630 (NKMD). Residues 663–665 (SAK) form a G5 region.

The protein belongs to the TRAFAC class translation factor GTPase superfamily. Classic translation factor GTPase family. IF-2 subfamily.

The protein resides in the cytoplasm. Functionally, one of the essential components for the initiation of protein synthesis. Protects formylmethionyl-tRNA from spontaneous hydrolysis and promotes its binding to the 30S ribosomal subunits. Also involved in the hydrolysis of GTP during the formation of the 70S ribosomal complex. The chain is Translation initiation factor IF-2 from Desulforapulum autotrophicum (strain ATCC 43914 / DSM 3382 / VKM B-1955 / HRM2) (Desulfobacterium autotrophicum).